The following is a 318-amino-acid chain: Ankyrin repeat domain-containing protein 1 (318 aa).

Residues 37–77 (ALEKQEDLKTTSKSLIELEEEKQSKEKQLKSELLKKKLEER) adopt a coiled-coil conformation. ANK repeat units lie at residues 151–180 (YKRTALHRACSEGHTAIVEKLIEAGANIEF), 184–213 (LESTALHWTCRGGSVETLKLLLNKGAAINA), 217–246 (LLSTPLHVAVRTGYYECGEHLIACEADLNA), 250–279 (EGDTPMHDGVRLNRYKMIRLLILYGVNLNI), and 283–314 (AGKTPMELVMQWQNGAKEIFNGLQNKSYKNSH).

The protein resides in the nucleus. Its function is as follows. May act as a nuclear transcription factor that negatively regulates the expression of cardiac genes. This Xenopus laevis (African clawed frog) protein is Ankyrin repeat domain-containing protein 1 (ankrd1).